Reading from the N-terminus, the 289-residue chain is Protoheme IX farnesyltransferase 2 (289 aa).

The next 9 membrane-spanning stretches (helical) occupy residues 1–21, 28–48, 76–96, 100–120, 125–145, 155–175, 199–219, 221–241, and 260–280; these read MIKP…FLLA, LTLM…GCGL, YSVL…LAIF, IALL…SLYM, VYGT…GYCA, VILL…IAIF, LHIV…PLAG, TGIA…GMAL, and CSIV…QLVV.

It belongs to the UbiA prenyltransferase family. Protoheme IX farnesyltransferase subfamily.

Its subcellular location is the cell inner membrane. The catalysed reaction is heme b + (2E,6E)-farnesyl diphosphate + H2O = Fe(II)-heme o + diphosphate. It functions in the pathway porphyrin-containing compound metabolism; heme O biosynthesis; heme O from protoheme: step 1/1. Its function is as follows. Converts heme B (protoheme IX) to heme O by substitution of the vinyl group on carbon 2 of heme B porphyrin ring with a hydroxyethyl farnesyl side group. The chain is Protoheme IX farnesyltransferase 2 from Shewanella woodyi (strain ATCC 51908 / MS32).